A 444-amino-acid polypeptide reads, in one-letter code: UPF0053 protein YhdP (444 aa).

Residues 1-201 (MDIVNLILVA…YKSGEINQSE (201 aa)) enclose the CNNM transmembrane domain. The next 3 membrane-spanning stretches (helical) occupy residues 7–27 (ILVAVLIALTAFFVASEFAII), 61–81 (ACQLGITLTSIGLGVLGESTI), and 101–121 (VISFIFAYAIITFLHVVVGEL). CBS domains follow at residues 220–282 (MIPR…SVDS) and 284–344 (ISQF…IRDE).

It belongs to the UPF0053 family.

Its subcellular location is the cell membrane. The polypeptide is UPF0053 protein YhdP (yhdP) (Bacillus subtilis (strain 168)).